A 503-amino-acid polypeptide reads, in one-letter code: Cytosolic carboxypeptidase 6 (503 aa).

The Peptidase M14 domain maps to 167 to 438 (YPYTYTRFQH…NVARTFLDYY (272 aa)). The Zn(2+) site is built by His-230, Glu-233, and His-328. Glu-401 functions as the Proton donor/acceptor in the catalytic mechanism. Composition is skewed to basic and acidic residues over residues 459–469 (IEVQRRKEKSP) and 487–503 (KGDK…STPF). The disordered stretch occupies residues 459–503 (IEVQRRKEKSPPYKHPLLRGPASNYPNSKGDKKSSVNHKDPSTPF).

It belongs to the peptidase M14 family. In terms of assembly, interacts with MYLK. It depends on Zn(2+) as a cofactor.

It is found in the cytoplasm. The protein resides in the cytosol. Its subcellular location is the cytoskeleton. It localises to the microtubule organizing center. The protein localises to the centrosome. It is found in the centriole. The protein resides in the golgi apparatus. Its subcellular location is the cilium basal body. The catalysed reaction is (L-glutamyl)(n+1)-gamma-L-glutamyl-L-glutamyl-[protein] + H2O = (L-glutamyl)(n)-gamma-L-glutamyl-L-glutamyl-[protein] + L-glutamate. It catalyses the reaction C-terminal L-alpha-aminoacyl-L-glutamyl-L-glutamyl-[tubulin] + H2O = C-terminal L-alpha-aminoacyl-L-glutamyl-[tubulin] + L-glutamate. Metallocarboxypeptidase that mediates protein deglutamylation of tubulin and non-tubulin target proteins. Catalyzes the removal of polyglutamate side chains present on the gamma-carboxyl group of glutamate residues within the C-terminal tail of tubulin protein. Specifically cleaves tubulin long-side-chains, while it is not able to remove the branching point glutamate. Also catalyzes the removal of polyglutamate residues from the carboxy-terminus of non-tubulin proteins such as MYLK. Mediates the deglutamylation of nucleotidyltransferase CGAS, leading to CGAS antiviral defense response activation. Involved in KLF4 deglutamylation which promotes KLF4 proteasome-mediated degradation, thereby negatively regulating cell pluripotency maintenance and embryogenesis. The protein is Cytosolic carboxypeptidase 6 of Homo sapiens (Human).